The following is a 747-amino-acid chain: Polyribonucleotide nucleotidyltransferase (747 aa).

Residues aspartate 493 and aspartate 499 each coordinate Mg(2+). Residues 560–619 form the KH domain; that stretch reads PRIITLQINPEKIGALIGPGGKTVRGITEATGAQIDIEEDGRVYISTPDAAAAQQAVAMV. Residues 629-698 form the S1 motif domain; it reads GDIFLGKVVR…GTGKVSLSRR (70 aa). Positions 705-747 are disordered; sequence TAEDRRAAGAGRGLRDGGGRSGGSDRGGDRGPRGDDRQRPRRR. Composition is skewed to basic and acidic residues over residues 706–722 and 730–747; these read AEDR…RDGG and RGGD…PRRR.

Belongs to the polyribonucleotide nucleotidyltransferase family. The cofactor is Mg(2+).

Its subcellular location is the cytoplasm. It catalyses the reaction RNA(n+1) + phosphate = RNA(n) + a ribonucleoside 5'-diphosphate. Its function is as follows. Involved in mRNA degradation. Catalyzes the phosphorolysis of single-stranded polyribonucleotides processively in the 3'- to 5'-direction. In Roseiflexus sp. (strain RS-1), this protein is Polyribonucleotide nucleotidyltransferase.